A 463-amino-acid chain; its full sequence is Chromogranin-A (463 aa).

Residues 1–18 (MRSTAVLALLLCAGQVFA) form the signal peptide. Residues Cys35 and Cys56 are joined by a disulfide bond. Positions 88–440 (KERAQQPLKQ…ANRRAEDQEL (353 aa)) are disordered. Low complexity predominate over residues 92–116 (QQPLKQQQPPKQQQQQQQQQQQEQQ). Position 119 is a phosphoserine (Ser119). Residues 134–160 (DAKHRDAAAEVPSRDTMEKRKDSDKGQ) are compositionally biased toward basic and acidic residues. Over residues 196–208 (TATNTQSPTSLPS) the composition is skewed to polar residues. Phosphoserine is present on residues Ser220, Ser282, and Ser308. The segment covering 301–310 (GKGELEHSQQ) has biased composition (basic and acidic residues). Residue Gly329 is modified to Glycine amide. Composition is skewed to basic and acidic residues over residues 331-340 (KGRELEHKQE) and 348-375 (RLSR…KRLE). Phosphoserine is present on residues Ser350 and Ser383. Position 384 is a methionine sulfoxide (Met384). Residues 409-437 (SSREDSVEARSDFEEKKEEEGSANRRAED) show a composition bias toward basic and acidic residues. Residues Ser410, Ser414, and Ser430 each carry the phosphoserine modification. Ser430 is a glycosylation site (O-linked (Xyl...) (chondroitin sulfate) serine). A Pyrrolidone carboxylic acid modification is found at Gln438. At Ser444 the chain carries Phosphoserine.

It belongs to the chromogranin/secretogranin protein family. Self-interacts; self-assembly is promoted in vitro by chondroitin sulfate attachment which occurs at mildly acidic pH conditions. Interacts with SCG3; this interaction is optimal in conditions mimicking the lumenal milieu of the trans-Golgi network, i.e. pH 5.5 and 10 mM Ca(+2). Interacts with ITPR1 in the secretory granules. Post-translationally, O-glycosylated; contains chondroitin sulfate (CS). CS attachment is pH-dependent, being observed at mildly acidic conditions of pH 5 but not at neutral pH, and promotes self-assembly in vitro.

The protein localises to the cytoplasmic vesicle. The protein resides in the secretory vesicle. It is found in the neuronal dense core vesicle. It localises to the secreted. In terms of biological role, strongly inhibits glucose induced insulin release from the pancreas. Functionally, inhibits catecholamine release from chromaffin cells and noradrenergic neurons by acting as a non-competitive nicotinic cholinergic antagonist. Can induce mast cell migration, degranulation and production of cytokines and chemokines. Regulates granule biogenesis in endocrine cells by up-regulating the transcription of protease nexin 1 (SERPINE2) via a cAMP-PKA-SP1 pathway. This leads to inhibition of granule protein degradation in the Golgi complex which in turn promotes granule formation. Pyroglutaminated (pGlu)-serpinin exerts an antiapoptotic effect on cells exposed to oxidative stress. The polypeptide is Chromogranin-A (Chga) (Mus musculus (Mouse)).